Consider the following 681-residue polypeptide: DNA-directed RNA polymerase subunit beta' (681 aa).

Positions 69, 71, 87, and 90 each coordinate Zn(2+). Mg(2+) is bound by residues Asp489, Asp491, and Asp493.

It belongs to the RNA polymerase beta' chain family. RpoC1 subfamily. As to quaternary structure, in plastids the minimal PEP RNA polymerase catalytic core is composed of four subunits: alpha, beta, beta', and beta''. When a (nuclear-encoded) sigma factor is associated with the core the holoenzyme is formed, which can initiate transcription. The cofactor is Mg(2+). Zn(2+) is required as a cofactor.

The protein localises to the plastid. The protein resides in the chloroplast. It catalyses the reaction RNA(n) + a ribonucleoside 5'-triphosphate = RNA(n+1) + diphosphate. DNA-dependent RNA polymerase catalyzes the transcription of DNA into RNA using the four ribonucleoside triphosphates as substrates. This chain is DNA-directed RNA polymerase subunit beta', found in Atropa belladonna (Belladonna).